Consider the following 311-residue polypeptide: MKVAVLGAAGGIGQALALLLKTQLPAGSKLSLYDIAPVTPGVAVDLSHIPTDVEVKGFAGQDPTDALVGADVVLMSAGVARKPGMDRSDLFNINAGIVRNLMEKVAVTCPKALVGIITNPVNTTVAIAAEVLKNAGVYDKNRLFGITTLDVIRSETFIAELKGLNVADVKVNVIGGHSGVTILPLLSQVEGVTFTDEEVAAMTTRIQNAGTEVVEAKAGGGSATLSMGQAACRFGLSLVRGLQGEANVVECAYVDGGSEHATFFAQPILLGKNGVEKVLPYGEISAFEANARDAMLDTLKGDIKLGVEFVK.

NAD(+) is bound by residues 7-13 (GAAGGIG) and aspartate 34. Positions 81 and 87 each coordinate substrate. NAD(+)-binding positions include asparagine 94 and 117–119 (ITN). Substrate contacts are provided by asparagine 119 and arginine 153. Histidine 177 serves as the catalytic Proton acceptor. Methionine 227 contacts NAD(+).

The protein belongs to the LDH/MDH superfamily. MDH type 1 family. As to quaternary structure, homodimer.

It catalyses the reaction (S)-malate + NAD(+) = oxaloacetate + NADH + H(+). Its function is as follows. Catalyzes the reversible oxidation of malate to oxaloacetate. The sequence is that of Malate dehydrogenase from Shewanella frigidimarina (strain NCIMB 400).